A 246-amino-acid polypeptide reads, in one-letter code: Mitochondrial inner membrane protease ATP23 homolog (246 aa).

H125 is a binding site for a divalent metal cation. E126 is a catalytic residue. Residue H129 participates in a divalent metal cation binding.

This sequence belongs to the peptidase M76 family. In terms of assembly, interacts with XRCC6.

The sequence is that of Mitochondrial inner membrane protease ATP23 homolog from Homo sapiens (Human).